Here is an 807-residue protein sequence, read N- to C-terminus: uncharacterized protein (807 aa).

The 286-residue stretch at 281–566 (IIQSLKSEEF…DKILFLGTNI (286 aa)) folds into the Reverse transcriptase domain.

The protein resides in the mitochondrion. This is an uncharacterized protein from Schizosaccharomyces pombe (strain 972 / ATCC 24843) (Fission yeast).